Consider the following 423-residue polypeptide: Putative competence-damage inducible protein (423 aa).

Belongs to the CinA family.

The sequence is that of Putative competence-damage inducible protein from Streptococcus equi subsp. equi (strain 4047).